The sequence spans 365 residues: Embryonic developmental protein tofu-6 (365 aa).

Residues 13–90 (AGFHIRNVPK…YSLKVSDHKN (78 aa)) form the RRM domain.

Required maternally for early embryonic cell divisions. May have a role in DNA replication. This chain is Embryonic developmental protein tofu-6, found in Caenorhabditis briggsae.